The chain runs to 122 residues: Large ribosomal subunit protein uL14 (122 aa).

Belongs to the universal ribosomal protein uL14 family. In terms of assembly, part of the 50S ribosomal subunit. Forms a cluster with proteins L3 and L19. In the 70S ribosome, L14 and L19 interact and together make contacts with the 16S rRNA in bridges B5 and B8.

In terms of biological role, binds to 23S rRNA. Forms part of two intersubunit bridges in the 70S ribosome. The protein is Large ribosomal subunit protein uL14 of Helicobacter acinonychis (strain Sheeba).